We begin with the raw amino-acid sequence, 21 residues long: Hemocyanin subunit 1 (21 aa).

The protein belongs to the tyrosinase family. Hemocyanin subfamily. Hemolymph.

Its subcellular location is the secreted. It localises to the extracellular space. In terms of biological role, hemocyanins are copper-containing oxygen carriers occurring freely dissolved in the hemolymph of many mollusks and arthropods. This chain is Hemocyanin subunit 1, found in Maja squinado (Mediterranean spider crab).